The primary structure comprises 325 residues: tRNA N6-adenosine threonylcarbamoyltransferase (325 aa).

The Fe cation site is built by His-107, His-111, and Tyr-127. Substrate is bound by residues 127 to 131 (YVSGG), Asp-159, Gly-172, Glu-176, and Asn-257. Fe cation is bound at residue Asp-285.

This sequence belongs to the KAE1 / TsaD family. As to quaternary structure, monomer. Component of the KEOPS complex that consists of Kae1, Bud32, Cgi121 and Pcc1; the whole complex dimerizes. It depends on Fe(2+) as a cofactor.

Its subcellular location is the cytoplasm. The catalysed reaction is L-threonylcarbamoyladenylate + adenosine(37) in tRNA = N(6)-L-threonylcarbamoyladenosine(37) in tRNA + AMP + H(+). In terms of biological role, required for the formation of a threonylcarbamoyl group on adenosine at position 37 (t(6)A37) in tRNAs that read codons beginning with adenine. Is a component of the KEOPS complex that is probably involved in the transfer of the threonylcarbamoyl moiety of threonylcarbamoyl-AMP (TC-AMP) to the N6 group of A37. Kae1 likely plays a direct catalytic role in this reaction, but requires other protein(s) of the complex to fulfill this activity. The polypeptide is tRNA N6-adenosine threonylcarbamoyltransferase (Thermococcus gammatolerans (strain DSM 15229 / JCM 11827 / EJ3)).